Here is a 155-residue protein sequence, read N- to C-terminus: SsrA-binding protein (155 aa).

Belongs to the SmpB family.

The protein localises to the cytoplasm. In terms of biological role, required for rescue of stalled ribosomes mediated by trans-translation. Binds to transfer-messenger RNA (tmRNA), required for stable association of tmRNA with ribosomes. tmRNA and SmpB together mimic tRNA shape, replacing the anticodon stem-loop with SmpB. tmRNA is encoded by the ssrA gene; the 2 termini fold to resemble tRNA(Ala) and it encodes a 'tag peptide', a short internal open reading frame. During trans-translation Ala-aminoacylated tmRNA acts like a tRNA, entering the A-site of stalled ribosomes, displacing the stalled mRNA. The ribosome then switches to translate the ORF on the tmRNA; the nascent peptide is terminated with the 'tag peptide' encoded by the tmRNA and targeted for degradation. The ribosome is freed to recommence translation, which seems to be the essential function of trans-translation. The polypeptide is SsrA-binding protein (Geobacillus thermodenitrificans (strain NG80-2)).